Here is a 185-residue protein sequence, read N- to C-terminus: MANAIIETAKERFAQSHQSLSREYASIRAGRANASLLDRIQVDYYGAPTPLNQLASITVPEARVLLISPFDKSSIKDIERALNASDLGITPANDGSVIRLVIPALTEETRKELAKEVKKVGENAKIAIRNIRRDAMDDAKKQEKAKEITEDELKTLEKDIQKVTDDAIKEIDRMTAEKEKELLSV.

Belongs to the RRF family.

The protein localises to the cytoplasm. Its function is as follows. Responsible for the release of ribosomes from messenger RNA at the termination of protein biosynthesis. May increase the efficiency of translation by recycling ribosomes from one round of translation to another. The chain is Ribosome-recycling factor from Streptococcus pyogenes serotype M28 (strain MGAS6180).